A 417-amino-acid chain; its full sequence is NADH-quinone oxidoreductase subunit D (417 aa).

This sequence belongs to the complex I 49 kDa subunit family. As to quaternary structure, NDH-1 is composed of 14 different subunits. Subunits NuoB, C, D, E, F, and G constitute the peripheral sector of the complex.

It localises to the cell inner membrane. It catalyses the reaction a quinone + NADH + 5 H(+)(in) = a quinol + NAD(+) + 4 H(+)(out). NDH-1 shuttles electrons from NADH, via FMN and iron-sulfur (Fe-S) centers, to quinones in the respiratory chain. The immediate electron acceptor for the enzyme in this species is believed to be ubiquinone. Couples the redox reaction to proton translocation (for every two electrons transferred, four hydrogen ions are translocated across the cytoplasmic membrane), and thus conserves the redox energy in a proton gradient. In Acidithiobacillus ferrooxidans (strain ATCC 53993 / BNL-5-31) (Leptospirillum ferrooxidans (ATCC 53993)), this protein is NADH-quinone oxidoreductase subunit D.